The chain runs to 181 residues: MSKTSLHATTIYAVRHNGEAAMAGDGQVTLGEQVIMKQTARKVRRLYEGKVLAGFAGSVADAFTLFEKFETKLQQFSGNLERAAVELAQEWRGDKQLRQLEAMLIVMDKDAILVVSGTGEVIAPDDDLIAIGSGGNYALSAGRALKRHASQLSAKEMAYESLKVASDICVFTNDNIIVETL.

T9 is an active-site residue. Na(+) is bound by residues S166, C169, and T172.

The protein belongs to the peptidase T1B family. HslV subfamily. As to quaternary structure, a double ring-shaped homohexamer of HslV is capped on each side by a ring-shaped HslU homohexamer. The assembly of the HslU/HslV complex is dependent on binding of ATP.

The protein localises to the cytoplasm. The enzyme catalyses ATP-dependent cleavage of peptide bonds with broad specificity.. With respect to regulation, allosterically activated by HslU binding. Its function is as follows. Protease subunit of a proteasome-like degradation complex believed to be a general protein degrading machinery. In Staphylococcus haemolyticus (strain JCSC1435), this protein is ATP-dependent protease subunit HslV.